The primary structure comprises 296 residues: 4-hydroxy-tetrahydrodipicolinate synthase (296 aa).

Thr-49 is a pyruvate binding site. The active-site Proton donor/acceptor is the Tyr-137. Lys-165 functions as the Schiff-base intermediate with substrate in the catalytic mechanism. Ile-207 contacts pyruvate.

Belongs to the DapA family. Homotetramer; dimer of dimers.

Its subcellular location is the cytoplasm. It catalyses the reaction L-aspartate 4-semialdehyde + pyruvate = (2S,4S)-4-hydroxy-2,3,4,5-tetrahydrodipicolinate + H2O + H(+). Its pathway is amino-acid biosynthesis; L-lysine biosynthesis via DAP pathway; (S)-tetrahydrodipicolinate from L-aspartate: step 3/4. Its function is as follows. Catalyzes the condensation of (S)-aspartate-beta-semialdehyde [(S)-ASA] and pyruvate to 4-hydroxy-tetrahydrodipicolinate (HTPA). This Rhodopseudomonas palustris (strain BisA53) protein is 4-hydroxy-tetrahydrodipicolinate synthase.